The following is a 318-amino-acid chain: NADH-ubiquinone oxidoreductase chain 1 (318 aa).

8 helical membrane passes run 2–22 (FMVN…FLTL), 71–91 (YIIA…PLPI), 98–118 (INLG…SILW), 146–166 (LAII…STLI), 171–191 (HTWL…STLA), 222–242 (LFFM…ATIF), 253–273 (EFFS…FLWV), and 294–314 (LPLT…LANI).

It belongs to the complex I subunit 1 family.

The protein localises to the mitochondrion inner membrane. The catalysed reaction is a ubiquinone + NADH + 5 H(+)(in) = a ubiquinol + NAD(+) + 4 H(+)(out). Functionally, core subunit of the mitochondrial membrane respiratory chain NADH dehydrogenase (Complex I) that is believed to belong to the minimal assembly required for catalysis. Complex I functions in the transfer of electrons from NADH to the respiratory chain. The immediate electron acceptor for the enzyme is believed to be ubiquinone. The sequence is that of NADH-ubiquinone oxidoreductase chain 1 (MT-ND1) from Nycticebus coucang (Slow loris).